A 335-amino-acid chain; its full sequence is MPIRHCIVHLIDKKPDGSPAVLHARDSELAASDAIENLLADLNDSYNAKQGKAWGFFHGESGAYPLSGWLKQYLDEEKDFTAFSRVAVEHLQKLMEESNLSTGGHILFAHYQQGMTEYLAIALLHHSEGVAVNAELDVTPSRHLDLGQLHLAARINLSEWKNNQNSKQYISFIKGKNGKKVSDYFRDFIGCQEGVDGPGETRTLLKAFSDFVESEDLPEESAREKTQTLVEYATTQTKLGEPVTLEELSSLIDEDRPKAFYDHIRNKDYGLSPEIPADKRTLNQFRRFTGRAEGLSISFEAHLLGDKVEYDEAAGTLIIKGLPTTLVDQLKRRKD.

The protein belongs to the YejK family.

The protein resides in the cytoplasm. Its subcellular location is the nucleoid. In Pseudomonas putida (strain GB-1), this protein is Nucleoid-associated protein PputGB1_0980.